The chain runs to 78 residues: Large ribosomal subunit protein bL28 (78 aa).

Residues 1–25 (MSRVCQVTGKRPAVGNNRSHARNAT) form a disordered region.

Belongs to the bacterial ribosomal protein bL28 family.

The sequence is that of Large ribosomal subunit protein bL28 from Vibrio vulnificus (strain CMCP6).